The primary structure comprises 511 residues: RNA-splicing ligase RtcB homolog (511 aa).

5 residues coordinate Mn(2+): Asp125, Cys128, His233, His265, and His359. A GMP-binding site is contributed by 232–236 (NHYAE). GMP-binding positions include 359-360 (HN), 408-411 (GGTM), Ser415, 434-437 (HGAG), and Lys510. Catalysis depends on His434, which acts as the GMP-histidine intermediate.

The protein belongs to the RtcB family. In terms of assembly, catalytic component of the tRNA-splicing ligase complex. The cofactor is Mn(2+).

The catalysed reaction is a 3'-end 3'-phospho-ribonucleotide-RNA + a 5'-end dephospho-ribonucleoside-RNA + GTP = a ribonucleotidyl-ribonucleotide-RNA + GMP + diphosphate. It carries out the reaction a 3'-end 2',3'-cyclophospho-ribonucleotide-RNA + a 5'-end dephospho-ribonucleoside-RNA + GTP + H2O = a ribonucleotidyl-ribonucleotide-RNA + GMP + diphosphate + H(+). Its function is as follows. Catalytic subunit of the tRNA-splicing ligase complex that acts by directly joining spliced tRNA halves to mature-sized tRNAs by incorporating the precursor-derived splice junction phosphate into the mature tRNA as a canonical 3',5'-phosphodiester. May act as an RNA ligase with broad substrate specificity, and may function toward other RNAs. This chain is RNA-splicing ligase RtcB homolog, found in Plasmodium knowlesi (strain H).